The primary structure comprises 549 residues: Glucose-6-phosphate isomerase (549 aa).

The Proton donor role is filled by Glu-355. Catalysis depends on residues His-386 and Lys-514.

Belongs to the GPI family.

It localises to the cytoplasm. It carries out the reaction alpha-D-glucose 6-phosphate = beta-D-fructose 6-phosphate. It functions in the pathway carbohydrate biosynthesis; gluconeogenesis. Its pathway is carbohydrate degradation; glycolysis; D-glyceraldehyde 3-phosphate and glycerone phosphate from D-glucose: step 2/4. Functionally, catalyzes the reversible isomerization of glucose-6-phosphate to fructose-6-phosphate. In Desulfatibacillum aliphaticivorans, this protein is Glucose-6-phosphate isomerase.